We begin with the raw amino-acid sequence, 137 residues long: 2-iminobutanoate/2-iminopropanoate deaminase (137 aa).

At serine 2 the chain carries N-acetylserine. N6-succinyllysine is present on residues lysine 13 and lysine 67. Threonine 74 is modified (phosphothreonine). Serine 136 carries the post-translational modification Phosphoserine.

In terms of assembly, homotrimer. Interacts with YTHDF2. Expressed by various malignant neoplasms.

It is found in the cytoplasm. Its subcellular location is the nucleus. The protein resides in the peroxisome. It localises to the mitochondrion. It catalyses the reaction 2-iminobutanoate + H2O = 2-oxobutanoate + NH4(+). The catalysed reaction is 2-iminopropanoate + H2O = pyruvate + NH4(+). Catalyzes the hydrolytic deamination of enamine/imine intermediates that form during the course of normal metabolism. May facilitate the release of ammonia from these potentially toxic reactive metabolites, reducing their impact on cellular components. It may act on enamine/imine intermediates formed by several types of pyridoxal-5'-phosphate-dependent dehydratases including L-threonine dehydratase. Functionally, also promotes endoribonucleolytic cleavage of some transcripts by promoting recruitment of the ribonuclease P/MRP complex. Acts by bridging YTHDF2 and the ribonuclease P/MRP complex. RIDA/HRSP12 binds to N6-methyladenosine (m6A)-containing mRNAs containing a 5'-GGUUC-3' motif: cooperative binding of RIDA/HRSP12 and YTHDF2 to such transcripts lead to recruitment of the ribonuclease P/MRP complex and subsequent endoribonucleolytic cleavage. This is 2-iminobutanoate/2-iminopropanoate deaminase from Capra hircus (Goat).